Here is a 78-residue protein sequence, read N- to C-terminus: Large ribosomal subunit protein bL28 (78 aa).

This sequence belongs to the bacterial ribosomal protein bL28 family.

The chain is Large ribosomal subunit protein bL28 from Erwinia tasmaniensis (strain DSM 17950 / CFBP 7177 / CIP 109463 / NCPPB 4357 / Et1/99).